The following is a 261-amino-acid chain: Acidic leucine-rich nuclear phosphoprotein 32 family member B (261 aa).

LRR repeat units lie at residues 16-40 (PAAV…LTAE), 43-64 (NLEF…PKLP), 65-87 (KLKK…AEKL), and 89-110 (NLTH…EPLK). Lys86 is subject to N6-acetyllysine. The LRRCT domain maps to 123-161 (CEVTNLNDYRESVFKLLPQLTYLDGYDREDREAPDSDAE). Residues 149-261 (DREDREAPDS…RETDDEGEDD (113 aa)) are disordered. The span at 157–243 (DSDAEVDGVD…DEDEDEEEEE (87 aa)) shows a compositional bias: acidic residues. Ser158 is subject to Phosphoserine. A compositionally biased stretch (basic and acidic residues) spans 244–254 (SGKGEKRKRET). The Nuclear localization signal motif lies at 249-252 (KRKR). At Thr254 the chain carries Phosphothreonine.

It belongs to the ANP32 family. As to quaternary structure, interacts with histones H3 and H4. Interacts with KLF5; this interaction induces promoter region-specific histone incorporation and inhibition of histone acetylation by ANP32B. Some Glu residues are glycylated by TTLL8; a modification that generates a side chains of glycine on the gamma-carboxyl groups of specific glutamate residues. Post-translationally, directly cleaved by caspase-3/CASP3.

Its subcellular location is the nucleus. Its function is as follows. Multifunctional protein that is involved in the regulation of many processes including cell proliferation, apoptosis, cell cycle progression or transcription. Regulates the proliferation of neuronal stem cells, differentiation of leukemic cells and progression from G1 to S phase of the cell cycle. As negative regulator of caspase-3-dependent apoptosis, may act as an antagonist of ANP32A in regulating tissue homeostasis. Exhibits histone chaperone properties, able to recruit histones to certain promoters, thus regulating the transcription of specific genes. Also plays an essential role in the nucleocytoplasmic transport of specific mRNAs via the uncommon nuclear mRNA export receptor XPO1/CRM1. Participates in the regulation of adequate adaptive immune responses by acting on mRNA expression and cell proliferation. The sequence is that of Acidic leucine-rich nuclear phosphoprotein 32 family member B (ANP32B) from Bos taurus (Bovine).